The following is a 167-amino-acid chain: Peptidoglycan-binding-like protein (167 aa).

An N-terminal signal peptide occupies residues 1-24; the sequence is MRSPKVKFLTIFTLSILITKMSFA.

It belongs to the IagB/IpgF/P19 family.

It is found in the periplasm. The chain is Peptidoglycan-binding-like protein (pbl) from Escherichia coli O157:H7.